Here is a 194-residue protein sequence, read N- to C-terminus: Ion-translocating oxidoreductase complex subunit A (194 aa).

6 helical membrane-spanning segments follow: residues 4-24 (LVLIMVSAILVNNFVLVQFLG), 39-59 (IGLSLATTFVLTLAAMCSYLV), 71-91 (FLRTISFILVIAVTVQFTEMV), 102-122 (VLGIFLPLITTNCIVLGVALL), 131-151 (FITATVNGFAAGLGFSLVLVL), and 172-192 (AIGMITAGLMSLAFMGFAGLI).

It belongs to the NqrDE/RnfAE family. As to quaternary structure, the complex is composed of six subunits: RnfA, RnfB, RnfC, RnfD, RnfE and RnfG.

It is found in the cell inner membrane. In terms of biological role, part of a membrane-bound complex that couples electron transfer with translocation of ions across the membrane. This is Ion-translocating oxidoreductase complex subunit A from Ectopseudomonas mendocina (strain ymp) (Pseudomonas mendocina).